A 407-amino-acid chain; its full sequence is Arrestin domain-containing protein 2 (407 aa).

The protein belongs to the arrestin family. As to quaternary structure, interacts with WWP1 (via WW domains).

The polypeptide is Arrestin domain-containing protein 2 (ARRDC2) (Homo sapiens (Human)).